The primary structure comprises 150 residues: Ribosome-binding factor A (150 aa).

The disordered stretch occupies residues 126–150 (EVARDLSHDDDEDGGADEAPRNGDE).

This sequence belongs to the RbfA family. In terms of assembly, monomer. Binds 30S ribosomal subunits, but not 50S ribosomal subunits or 70S ribosomes.

It localises to the cytoplasm. Functionally, one of several proteins that assist in the late maturation steps of the functional core of the 30S ribosomal subunit. Associates with free 30S ribosomal subunits (but not with 30S subunits that are part of 70S ribosomes or polysomes). Required for efficient processing of 16S rRNA. May interact with the 5'-terminal helix region of 16S rRNA. The protein is Ribosome-binding factor A of Brucella suis (strain ATCC 23445 / NCTC 10510).